The sequence spans 688 residues: Bifunctional protein GAL10 (688 aa).

The interval 1–346 is galactowaldenase; that stretch reads MSEDKYCLVT…TQDNPFGYQI (346 aa). 6-37 is a binding site for NAD(+); it reads YCLVTGGAGYIGSHTVVELCEAGYKCIVVDNL. The interval 347–688 is mutarotase; the sequence is KGVDSKFFGD…HKLSYTFRTL (342 aa). The active-site For mutarotase activity is the His-525.

It in the N-terminal section; belongs to the NAD(P)-dependent epimerase/dehydratase family. In the C-terminal section; belongs to the aldose epimerase family. NAD(+) serves as cofactor.

The enzyme catalyses UDP-alpha-D-glucose = UDP-alpha-D-galactose. It carries out the reaction alpha-D-glucose = beta-D-glucose. It participates in carbohydrate metabolism; galactose metabolism. The protein operates within carbohydrate metabolism; hexose metabolism. In terms of biological role, mutarotase converts alpha-aldose to the beta-anomer. It is active on D-glucose, L-arabinose, D-xylose, D-galactose, maltose and lactose. The protein is Bifunctional protein GAL10 (GAL10) of Kluyveromyces lactis (strain ATCC 8585 / CBS 2359 / DSM 70799 / NBRC 1267 / NRRL Y-1140 / WM37) (Yeast).